The following is a 276-amino-acid chain: Rhomboid protease GlpG (276 aa).

Transmembrane regions (helical) follow at residues 94–114 (GPFT…MNVV), 142–162 (ALMH…WYLG), 169–189 (LGSG…GYVQ), 192–212 (FSGP…GYAW), 229–249 (LITF…GMSI), and 250–270 (ANGA…ADTL). Residue Ser-201 is the Nucleophile of the active site. The active site involves His-254.

It belongs to the peptidase S54 family.

The protein localises to the cell inner membrane. It carries out the reaction Cleaves type-1 transmembrane domains using a catalytic dyad composed of serine and histidine that are contributed by different transmembrane domains.. Functionally, rhomboid-type serine protease that catalyzes intramembrane proteolysis. The polypeptide is Rhomboid protease GlpG (Enterobacter sp. (strain 638)).